Consider the following 388-residue polypeptide: Gastricsin (388 aa).

The N-terminal stretch at 1-16 (MKWLLVALVCLHLLEA) is a signal peptide. A propeptide spans 17 to 59 (AVIKVPLRKFKSIRETLKEKGLLKEFLNTHKYDPALKYRFGDF) (activation peptide). Residues 73-385 (YFGEISIGTP…DMANNRVGFA (313 aa)) form the Peptidase A1 domain. The active site involves Asp91. Intrachain disulfides connect Cys104-Cys109 and Cys267-Cys271. Asp276 is an active-site residue. Residues Cys310 and Cys343 are joined by a disulfide bond.

The protein belongs to the peptidase A1 family.

It is found in the secreted. The catalysed reaction is More restricted specificity than pepsin A, but shows preferential cleavage at Tyr-|-Xaa bonds. High activity on hemoglobin.. In terms of biological role, hydrolyzes a variety of proteins. The chain is Gastricsin (PGC) from Oryctolagus cuniculus (Rabbit).